The primary structure comprises 315 residues: Olfactory receptor 10H5 (315 aa).

Topologically, residues 1–25 (MQGLNHTSVSEFILVGFSAFPHLQL) are extracellular. Asparagine 5 carries an N-linked (GlcNAc...) asparagine glycan. A helical membrane pass occupies residues 26–46 (MLFLLFLLMYLFTLLGNLLIM). The Cytoplasmic segment spans residues 47-54 (ATVWSERS). The helical transmembrane segment at 55-75 (LHMPMYLFLCALSITEILYTV) threads the bilayer. Over 76-99 (AIIPRMLADLLSTQRSIAFLACAS) the chain is Extracellular. Cysteine 97 and cysteine 189 are disulfide-bonded. The chain crosses the membrane as a helical span at residues 100–120 (QMFFSFSFGFTHSFLLTVMGY). Residues 121–139 (DRYVAICHPLRYNVLMSLR) lie on the Cytoplasmic side of the membrane. Residues 140–160 (GCTCRVGCSWAGGLVMGMVVT) form a helical membrane-spanning segment. Residues 161–197 (SAIFHLAFCGHKEIHHFFCHVPPLLKLACGDDVLVVA) lie on the Extracellular side of the membrane. Residues 198-218 (KGVGLVCITALLGCFLLILLS) form a helical membrane-spanning segment. The Cytoplasmic portion of the chain corresponds to 219-238 (YAFIVAAILKIPSAEGRNKA). A helical transmembrane segment spans residues 239–259 (FSTCASHLTVVVVHYGFASVI). Residues 260–272 (YLKPKGPQSPEGD) lie on the Extracellular side of the membrane. Residues 273–293 (TLMGITYTVLTPFLSPIIFSL) traverse the membrane as a helical segment. Residues 294–315 (RNKELKVAMKKTCFTKLFPQNC) lie on the Cytoplasmic side of the membrane.

The protein belongs to the G-protein coupled receptor 1 family.

It is found in the cell membrane. Functionally, odorant receptor. In Homo sapiens (Human), this protein is Olfactory receptor 10H5 (OR10H5).